Reading from the N-terminus, the 266-residue chain is 3-methyl-2-oxobutanoate hydroxymethyltransferase 2 (266 aa).

Mg(2+) contacts are provided by Asp45 and Asp84. 3-methyl-2-oxobutanoate-binding positions include 45-46 (DS), Asp84, and Lys112. Glu114 provides a ligand contact to Mg(2+). Glu181 serves as the catalytic Proton acceptor.

It belongs to the PanB family. As to quaternary structure, homodecamer; pentamer of dimers. Requires Mg(2+) as cofactor.

The protein localises to the cytoplasm. It catalyses the reaction 3-methyl-2-oxobutanoate + (6R)-5,10-methylene-5,6,7,8-tetrahydrofolate + H2O = 2-dehydropantoate + (6S)-5,6,7,8-tetrahydrofolate. The protein operates within cofactor biosynthesis; (R)-pantothenate biosynthesis; (R)-pantoate from 3-methyl-2-oxobutanoate: step 1/2. Catalyzes the reversible reaction in which hydroxymethyl group from 5,10-methylenetetrahydrofolate is transferred onto alpha-ketoisovalerate to form ketopantoate. The chain is 3-methyl-2-oxobutanoate hydroxymethyltransferase 2 from Pseudomonas aeruginosa (strain ATCC 15692 / DSM 22644 / CIP 104116 / JCM 14847 / LMG 12228 / 1C / PRS 101 / PAO1).